The primary structure comprises 91 residues: Small ribosomal subunit protein bS20 (91 aa).

The tract at residues 1–28 is disordered; the sequence is MANTASAEKRNRQAQKRRARNVQVRTGV.

The protein belongs to the bacterial ribosomal protein bS20 family.

Functionally, binds directly to 16S ribosomal RNA. The sequence is that of Small ribosomal subunit protein bS20 from Anaeromyxobacter dehalogenans (strain 2CP-1 / ATCC BAA-258).